A 388-amino-acid polypeptide reads, in one-letter code: Arginine biosynthesis bifunctional protein ArgJ (388 aa).

The substrate site is built by Thr-150, Lys-172, Thr-183, Glu-263, Asn-383, and Thr-388. Catalysis depends on Thr-183, which acts as the Nucleophile.

Belongs to the ArgJ family. Heterotetramer of two alpha and two beta chains.

The protein localises to the cytoplasm. The enzyme catalyses N(2)-acetyl-L-ornithine + L-glutamate = N-acetyl-L-glutamate + L-ornithine. It carries out the reaction L-glutamate + acetyl-CoA = N-acetyl-L-glutamate + CoA + H(+). The protein operates within amino-acid biosynthesis; L-arginine biosynthesis; L-ornithine and N-acetyl-L-glutamate from L-glutamate and N(2)-acetyl-L-ornithine (cyclic): step 1/1. It functions in the pathway amino-acid biosynthesis; L-arginine biosynthesis; N(2)-acetyl-L-ornithine from L-glutamate: step 1/4. Functionally, catalyzes two activities which are involved in the cyclic version of arginine biosynthesis: the synthesis of N-acetylglutamate from glutamate and acetyl-CoA as the acetyl donor, and of ornithine by transacetylation between N(2)-acetylornithine and glutamate. In Corynebacterium efficiens (strain DSM 44549 / YS-314 / AJ 12310 / JCM 11189 / NBRC 100395), this protein is Arginine biosynthesis bifunctional protein ArgJ.